Reading from the N-terminus, the 515-residue chain is Glucose-6-phosphate 1-dehydrogenase 6, cytoplasmic (515 aa).

Residues 38–45 (GASGDLAK), arginine 73, tyrosine 155, and lysine 182 each bind NADP(+). D-glucose 6-phosphate is bound by residues lysine 182, 212-216 (HYLGK), glutamate 250, and aspartate 269. The active-site Proton acceptor is the histidine 274. Position 357 (lysine 357) interacts with NADP(+). Residues lysine 360 and arginine 365 each coordinate D-glucose 6-phosphate. The NADP(+) site is built by lysine 366, arginine 370, and arginine 394. Glutamine 396 contributes to the D-glucose 6-phosphate binding site. NADP(+)-binding positions include 402-404 (YMK), 422-424 (DLS), arginine 488, and tryptophan 510.

It belongs to the glucose-6-phosphate dehydrogenase family. As to quaternary structure, forms homodimer. Expressed in roots, leaves, stems, buds, flowers and siliques.

It localises to the cytoplasm. The protein resides in the cytosol. The enzyme catalyses D-glucose 6-phosphate + NADP(+) = 6-phospho-D-glucono-1,5-lactone + NADPH + H(+). It participates in carbohydrate degradation; pentose phosphate pathway; D-ribulose 5-phosphate from D-glucose 6-phosphate (oxidative stage): step 1/3. Regulated by metabolites. Its function is as follows. Catalyzes the rate-limiting step of the oxidative pentose-phosphate pathway, which represents a route for the dissimilation of carbohydrates besides glycolysis. The main function of this enzyme is to provide reducing power (NADPH) and pentose phosphates for fatty acid and nucleic acid synthesis which are involved in membrane synthesis and cell division. This chain is Glucose-6-phosphate 1-dehydrogenase 6, cytoplasmic, found in Arabidopsis thaliana (Mouse-ear cress).